A 273-amino-acid chain; its full sequence is uncharacterized protein (273 aa).

This is an uncharacterized protein from Mycobacterium bovis (strain ATCC BAA-935 / AF2122/97).